An 883-amino-acid polypeptide reads, in one-letter code: Phosphoenolpyruvate carboxylase (883 aa).

Active-site residues include histidine 141 and lysine 547.

The protein belongs to the PEPCase type 1 family. Mg(2+) is required as a cofactor.

The catalysed reaction is oxaloacetate + phosphate = phosphoenolpyruvate + hydrogencarbonate. Functionally, forms oxaloacetate, a four-carbon dicarboxylic acid source for the tricarboxylic acid cycle. The polypeptide is Phosphoenolpyruvate carboxylase (Chromohalobacter salexigens (strain ATCC BAA-138 / DSM 3043 / CIP 106854 / NCIMB 13768 / 1H11)).